The chain runs to 101 residues: Movement protein (101 aa).

The helical transmembrane segment at 30 to 50 (EVAILSFVALICFYLLYLWVL) threads the bilayer. A disordered region spans residues 75-101 (VDRSNPIPNLPAPPSQGNPGPFVPGTG).

The protein belongs to the mastrevirus movement protein family. As to quaternary structure, interacts with the capsid protein (CP). Part of a MP-CP-viral DNA complex.

It localises to the host membrane. Involved in the viral transport within, and between cells. The chain is Movement protein from Maize streak virus genotype A (isolate South Africa) (MSV).